The chain runs to 514 residues: MKSSLKQWRRLALGLILVWALLFLALLSYFMESRVDDPHAAAALSYTDTRRLTSLQGNPRTIMATHLGLATSSAPSTSSNTQQEQSQEENPSADPQPSPLSQEAYPYPDPQSLAAWSAFGTQDVGSRSTGVSRNRERQEYNQDSPQEDEDEEEEVIGGEEEDEEGGDEGRGRTTKRVARHGSSDPHEYYVPRYKSIVHGLWKGSLSMGMLSPRLQRAMKDYLNNNKHGVAYRGHRKAKQSRQQVLCELKKREKIRTLDGAEMPFSKLGWQKIVPALPLSQIHRPGLKTCAVVTSAGAMLHSGLGKEIDSHDAVLRFNTAPTVGYERDVGNKTTIRIINSQILANPMHRFNRSSLYKNVTLVAWDPAPYTLNLHQWYSNPDYNLFTPYMEYRMRFPSQPFYILHPKYIWQLWDVIQANNLENIQPNPPSSGFIGILLMMSLCEEVHVYEYIPSLRQTDLCHYHERYYDAACTLGAYHPLLYEKMLIQRMNIGSEDELKRKGKVTLPGFNKVHCEP.

Residues 1–10 (MKSSLKQWRR) are Cytoplasmic-facing. Residues 11–31 (LALGLILVWALLFLALLSYFM) form a helical; Signal-anchor for type II membrane protein membrane-spanning segment. At 32 to 514 (ESRVDDPHAA…PGFNKVHCEP (483 aa)) the chain is on the lumenal side. Residues 70–92 (ATSSAPSTSSNTQQEQSQEENPS) are compositionally biased toward low complexity. Residues 70–183 (ATSSAPSTSS…TKRVARHGSS (114 aa)) form a disordered region. Residues 119-132 (FGTQDVGSRSTGVS) show a composition bias toward polar residues. The span at 145-166 (PQEDEDEEEEVIGGEEEDEEGG) shows a compositional bias: acidic residues. Cystine bridges form between Cys246–Cys512, Cys289–Cys441, and Cys459–Cys470. 3 N-linked (GlcNAc...) asparagine glycosylation sites follow: Asn330, Asn350, and Asn357.

Belongs to the glycosyltransferase 29 family.

The protein resides in the golgi apparatus. It localises to the golgi stack membrane. The catalysed reaction is a beta-D-galactoside + CMP-N-acetyl-beta-neuraminate = an N-acetyl-alpha-neuraminyl-(2-&gt;6)-beta-D-galactosyl derivative + CMP + H(+). Its function is as follows. Transfers sialic acid from the donor of substrate CMP-sialic acid to galactose containing acceptor substrates. The protein is Beta-galactoside alpha-2,6-sialyltransferase 2 (st6gal2) of Danio rerio (Zebrafish).